A 223-amino-acid chain; its full sequence is Ribonuclease 3 (223 aa).

The RNase III domain occupies 4-127; it reads LNRLEEHLGY…LMGAIYLESG (124 aa). A Mg(2+)-binding site is contributed by glutamate 40. Aspartate 44 is an active-site residue. Positions 113 and 116 each coordinate Mg(2+). Residue glutamate 116 is part of the active site. The DRBM domain occupies 154–223; sequence DYKTTLQEIT…AWKVLQGMNI (70 aa).

It belongs to the ribonuclease III family. In terms of assembly, homodimer. The cofactor is Mg(2+).

Its subcellular location is the cytoplasm. It catalyses the reaction Endonucleolytic cleavage to 5'-phosphomonoester.. Its function is as follows. Digests double-stranded RNA. Involved in the processing of primary rRNA transcript to yield the immediate precursors to the large and small rRNAs (23S and 16S). Processes some mRNAs, and tRNAs when they are encoded in the rRNA operon. Processes pre-crRNA and tracrRNA of type II CRISPR loci if present in the organism. The chain is Ribonuclease 3 from Campylobacter fetus subsp. fetus (strain 82-40).